Here is a 381-residue protein sequence, read N- to C-terminus: 3-hydroxyisobutyryl-CoA hydrolase, mitochondrial (381 aa).

The N-terminal 25 residues, 1-25 (MDRLLTISNHIGKNIRQFSTSTEEV), are a transit peptide targeting the mitochondrion. Residues Glu116, Gly141, Glu164, and Asp172 each coordinate substrate.

The protein belongs to the enoyl-CoA hydratase/isomerase family.

Its subcellular location is the mitochondrion. It carries out the reaction 3-hydroxy-2-methylpropanoyl-CoA + H2O = 3-hydroxy-2-methylpropanoate + CoA + H(+). Its pathway is amino-acid degradation; L-valine degradation. Its function is as follows. Hydrolyzes 3-hydroxyisobutyryl-CoA (HIBYL-CoA), a saline catabolite. The protein is 3-hydroxyisobutyryl-CoA hydrolase, mitochondrial (hibch) of Dictyostelium discoideum (Social amoeba).